The sequence spans 128 residues: Large ribosomal subunit protein uL18 (128 aa).

The interval 1 to 36 (MAKRSSLTRRGVSPRAAARARRHMRVRKKVRGTPER) is disordered. The span at 18 to 31 (ARARRHMRVRKKVR) shows a compositional bias: basic residues.

It belongs to the universal ribosomal protein uL18 family. In terms of assembly, part of the 50S ribosomal subunit; part of the 5S rRNA/L5/L18/L25 subcomplex. Contacts the 5S and 23S rRNAs.

In terms of biological role, this is one of the proteins that bind and probably mediate the attachment of the 5S RNA into the large ribosomal subunit, where it forms part of the central protuberance. The chain is Large ribosomal subunit protein uL18 from Thermobifida fusca (strain YX).